Reading from the N-terminus, the 393-residue chain is Elongation factor Tu (393 aa).

The tr-type G domain occupies 6-204; that stretch reads KPHINVGTIG…ALEKIELPMR (199 aa). Residues 15–22 are G1; the sequence is GHVDHGKT. 15-22 serves as a coordination point for GTP; it reads GHVDHGKT. Residue T22 coordinates Mg(2+). Residues 58–62 are G2; it reads GITIS. The segment at 79–82 is G3; the sequence is DCPG. Residues 79 to 83 and 134 to 137 contribute to the GTP site; these read DCPGH and NKCD. Positions 134 to 137 are G4; it reads NKCD. The interval 172 to 174 is G5; that stretch reads SAV.

It belongs to the TRAFAC class translation factor GTPase superfamily. Classic translation factor GTPase family. EF-Tu/EF-1A subfamily. As to quaternary structure, monomer.

Its subcellular location is the cytoplasm. It carries out the reaction GTP + H2O = GDP + phosphate + H(+). Its function is as follows. GTP hydrolase that promotes the GTP-dependent binding of aminoacyl-tRNA to the A-site of ribosomes during protein biosynthesis. The protein is Elongation factor Tu of Anaplasma phagocytophilum (strain HZ).